The primary structure comprises 163 residues: Cyclic pyranopterin monophosphate synthase (163 aa).

Substrate-binding positions include 75 to 77 (LCH) and 113 to 114 (ME). Aspartate 128 is an active-site residue.

The protein belongs to the MoaC family. As to quaternary structure, homohexamer; trimer of dimers.

It catalyses the reaction (8S)-3',8-cyclo-7,8-dihydroguanosine 5'-triphosphate = cyclic pyranopterin phosphate + diphosphate. It functions in the pathway cofactor biosynthesis; molybdopterin biosynthesis. Catalyzes the conversion of (8S)-3',8-cyclo-7,8-dihydroguanosine 5'-triphosphate to cyclic pyranopterin monophosphate (cPMP). This chain is Cyclic pyranopterin monophosphate synthase, found in Jannaschia sp. (strain CCS1).